The chain runs to 253 residues: 5'/3'-nucleotidase SurE (253 aa).

A divalent metal cation is bound by residues Asp8, Asp9, Ser39, and Asn92.

Belongs to the SurE nucleotidase family. A divalent metal cation is required as a cofactor.

Its subcellular location is the cytoplasm. The enzyme catalyses a ribonucleoside 5'-phosphate + H2O = a ribonucleoside + phosphate. It carries out the reaction a ribonucleoside 3'-phosphate + H2O = a ribonucleoside + phosphate. The catalysed reaction is [phosphate](n) + H2O = [phosphate](n-1) + phosphate + H(+). Nucleotidase with a broad substrate specificity as it can dephosphorylate various ribo- and deoxyribonucleoside 5'-monophosphates and ribonucleoside 3'-monophosphates with highest affinity to 3'-AMP. Also hydrolyzes polyphosphate (exopolyphosphatase activity) with the preference for short-chain-length substrates (P20-25). Might be involved in the regulation of dNTP and NTP pools, and in the turnover of 3'-mononucleotides produced by numerous intracellular RNases (T1, T2, and F) during the degradation of various RNAs. This chain is 5'/3'-nucleotidase SurE, found in Shigella dysenteriae serotype 1 (strain Sd197).